We begin with the raw amino-acid sequence, 781 residues long: uncharacterized protein (781 aa).

Disordered regions lie at residues 1-27 (MKKD…ELDD) and 56-268 (NLHI…SDVH). The segment covering 11-27 (ESLEEYDEENYTSELDD) has biased composition (acidic residues). The segment covering 57–73 (LHIDEKSKGNIHDDTNK) has biased composition (basic and acidic residues). A compositionally biased stretch (basic residues) spans 80–94 (KRKGKLNNKKLKLKK). The span at 99–116 (SDEEEENDKNDKNDDDQY) shows a compositional bias: acidic residues. Composition is skewed to basic and acidic residues over residues 123–144 (DEDR…KGDN), 170–188 (EKNH…HVSV), 216–227 (KTSKKNKNDKTN), and 251–268 (DDYH…SDVH). Positions 616–655 (NDTYTLSKLNNQINELTKKINILRGNLDKARKNHAAMKSN) form a coiled coil.

This is an uncharacterized protein from Plasmodium falciparum (isolate 3D7).